The primary structure comprises 200 residues: Dephospho-CoA kinase (200 aa).

Residues 4–200 (VIGLTGGIAS…AILKKWNIID (197 aa)) form the DPCK domain. Position 12 to 17 (12 to 17 (ASGKST)) interacts with ATP.

This sequence belongs to the CoaE family.

Its subcellular location is the cytoplasm. It catalyses the reaction 3'-dephospho-CoA + ATP = ADP + CoA + H(+). It functions in the pathway cofactor biosynthesis; coenzyme A biosynthesis; CoA from (R)-pantothenate: step 5/5. Its function is as follows. Catalyzes the phosphorylation of the 3'-hydroxyl group of dephosphocoenzyme A to form coenzyme A. In Bacillus thuringiensis subsp. konkukian (strain 97-27), this protein is Dephospho-CoA kinase.